A 130-amino-acid chain; its full sequence is Small ribosomal subunit protein uS8 (130 aa).

Belongs to the universal ribosomal protein uS8 family. Part of the 30S ribosomal subunit.

Its function is as follows. One of the primary rRNA binding proteins, it binds directly to 16S rRNA central domain where it helps coordinate assembly of the platform of the 30S subunit. In Halorubrum lacusprofundi (strain ATCC 49239 / DSM 5036 / JCM 8891 / ACAM 34), this protein is Small ribosomal subunit protein uS8.